Reading from the N-terminus, the 251-residue chain is Octanoyltransferase (251 aa).

A BPL/LPL catalytic domain is found at alanine 56–serine 237. Substrate-binding positions include arginine 96–histidine 103, alanine 168–glycine 170, and glycine 181–serine 183. Cysteine 199 acts as the Acyl-thioester intermediate in catalysis.

Belongs to the LipB family.

The protein resides in the cytoplasm. The enzyme catalyses octanoyl-[ACP] + L-lysyl-[protein] = N(6)-octanoyl-L-lysyl-[protein] + holo-[ACP] + H(+). It functions in the pathway protein modification; protein lipoylation via endogenous pathway; protein N(6)-(lipoyl)lysine from octanoyl-[acyl-carrier-protein]: step 1/2. Its function is as follows. Catalyzes the transfer of endogenously produced octanoic acid from octanoyl-acyl-carrier-protein onto the lipoyl domains of lipoate-dependent enzymes. Lipoyl-ACP can also act as a substrate although octanoyl-ACP is likely to be the physiological substrate. This is Octanoyltransferase from Burkholderia ambifaria (strain ATCC BAA-244 / DSM 16087 / CCUG 44356 / LMG 19182 / AMMD) (Burkholderia cepacia (strain AMMD)).